A 325-amino-acid polypeptide reads, in one-letter code: Tetraacyldisaccharide 4'-kinase (325 aa).

Residue 55-62 participates in ATP binding; that stretch reads TAGGNGKT.

Belongs to the LpxK family.

The catalysed reaction is a lipid A disaccharide + ATP = a lipid IVA + ADP + H(+). It participates in glycolipid biosynthesis; lipid IV(A) biosynthesis; lipid IV(A) from (3R)-3-hydroxytetradecanoyl-[acyl-carrier-protein] and UDP-N-acetyl-alpha-D-glucosamine: step 6/6. In terms of biological role, transfers the gamma-phosphate of ATP to the 4'-position of a tetraacyldisaccharide 1-phosphate intermediate (termed DS-1-P) to form tetraacyldisaccharide 1,4'-bis-phosphate (lipid IVA). This chain is Tetraacyldisaccharide 4'-kinase, found in Salmonella paratyphi B (strain ATCC BAA-1250 / SPB7).